Consider the following 226-residue polypeptide: ATP synthase F(0) complex subunit a (226 aa).

6 helical membrane passes run 12–32 (PTMM…ILFP), 68–88 (WALM…LGLL), 97–117 (QLSM…ITGF), 138–158 (IPML…ALAV), 164–184 (ITAG…LMNI), and 200–222 (TILE…SLYL).

The protein belongs to the ATPase A chain family. Component of the ATP synthase complex composed at least of ATP5F1A/subunit alpha, ATP5F1B/subunit beta, ATP5MC1/subunit c (homooctomer), MT-ATP6/subunit a, MT-ATP8/subunit 8, ATP5ME/subunit e, ATP5MF/subunit f, ATP5MG/subunit g, ATP5MK/subunit k, ATP5MJ/subunit j, ATP5F1C/subunit gamma, ATP5F1D/subunit delta, ATP5F1E/subunit epsilon, ATP5PF/subunit F6, ATP5PB/subunit b, ATP5PD/subunit d, ATP5PO/subunit OSCP. ATP synthase complex consists of a soluble F(1) head domain (subunits alpha(3) and beta(3)) - the catalytic core - and a membrane F(0) domain - the membrane proton channel (subunits c, a, 8, e, f, g, k and j). These two domains are linked by a central stalk (subunits gamma, delta, and epsilon) rotating inside the F1 region and a stationary peripheral stalk (subunits F6, b, d, and OSCP). Interacts with DNAJC30; interaction is direct.

The protein localises to the mitochondrion inner membrane. The enzyme catalyses H(+)(in) = H(+)(out). Functionally, subunit a, of the mitochondrial membrane ATP synthase complex (F(1)F(0) ATP synthase or Complex V) that produces ATP from ADP in the presence of a proton gradient across the membrane which is generated by electron transport complexes of the respiratory chain. ATP synthase complex consist of a soluble F(1) head domain - the catalytic core - and a membrane F(1) domain - the membrane proton channel. These two domains are linked by a central stalk rotating inside the F(1) region and a stationary peripheral stalk. During catalysis, ATP synthesis in the catalytic domain of F(1) is coupled via a rotary mechanism of the central stalk subunits to proton translocation. With the subunit c (ATP5MC1), forms the proton-conducting channel in the F(0) domain, that contains two crucial half-channels (inlet and outlet) that facilitate proton movement from the mitochondrial intermembrane space (IMS) into the matrix. Protons are taken up via the inlet half-channel and released through the outlet half-channel, following a Grotthuss mechanism. In Felis catus (Cat), this protein is ATP synthase F(0) complex subunit a.